The chain runs to 205 residues: Putative 3-methyladenine DNA glycosylase (205 aa).

This sequence belongs to the DNA glycosylase MPG family.

This is Putative 3-methyladenine DNA glycosylase from Bacillus cereus (strain ATCC 10987 / NRS 248).